A 502-amino-acid polypeptide reads, in one-letter code: Lysine--tRNA ligase (502 aa).

Mg(2+) contacts are provided by Glu413 and Glu420.

The protein belongs to the class-II aminoacyl-tRNA synthetase family. Homodimer. Mg(2+) serves as cofactor.

Its subcellular location is the cytoplasm. It catalyses the reaction tRNA(Lys) + L-lysine + ATP = L-lysyl-tRNA(Lys) + AMP + diphosphate. This is Lysine--tRNA ligase from Haemophilus influenzae (strain PittGG).